Consider the following 332-residue polypeptide: Ketol-acid reductoisomerase (NADP(+)) (332 aa).

Positions 2–182 constitute a KARI N-terminal Rossmann domain; it reads AKVYHDTEVS…GATRAGVLET (181 aa). NADP(+) contacts are provided by residues 25–28, Arg48, Ser53, and 83–86; these read YGSQ and DTEQ. Residue His108 is part of the active site. Gly134 serves as a coordination point for NADP(+). The 146-residue stretch at 183–328 folds into the KARI C-terminal knotted domain; that stretch reads TFKEETETDL…KVLREMMPWL (146 aa). Mg(2+) contacts are provided by Asp191, Glu195, Glu227, and Glu231. Ser252 contributes to the substrate binding site.

This sequence belongs to the ketol-acid reductoisomerase family. It depends on Mg(2+) as a cofactor.

The enzyme catalyses (2R)-2,3-dihydroxy-3-methylbutanoate + NADP(+) = (2S)-2-acetolactate + NADPH + H(+). It catalyses the reaction (2R,3R)-2,3-dihydroxy-3-methylpentanoate + NADP(+) = (S)-2-ethyl-2-hydroxy-3-oxobutanoate + NADPH + H(+). The protein operates within amino-acid biosynthesis; L-isoleucine biosynthesis; L-isoleucine from 2-oxobutanoate: step 2/4. Its pathway is amino-acid biosynthesis; L-valine biosynthesis; L-valine from pyruvate: step 2/4. Involved in the biosynthesis of branched-chain amino acids (BCAA). Catalyzes an alkyl-migration followed by a ketol-acid reduction of (S)-2-acetolactate (S2AL) to yield (R)-2,3-dihydroxy-isovalerate. In the isomerase reaction, S2AL is rearranged via a Mg-dependent methyl migration to produce 3-hydroxy-3-methyl-2-ketobutyrate (HMKB). In the reductase reaction, this 2-ketoacid undergoes a metal-dependent reduction by NADPH to yield (R)-2,3-dihydroxy-isovalerate. The chain is Ketol-acid reductoisomerase (NADP(+)) from Dictyoglomus turgidum (strain DSM 6724 / Z-1310).